The chain runs to 237 residues: tRNA (guanine-N(7)-)-methyltransferase (237 aa).

Residues Glu-67, Glu-92, Asp-119, and Asp-141 each coordinate S-adenosyl-L-methionine. Asp-141 is an active-site residue. Substrate contacts are provided by residues Lys-145, Asp-177, and 214–217; that span reads TRYE.

The protein belongs to the class I-like SAM-binding methyltransferase superfamily. TrmB family.

The catalysed reaction is guanosine(46) in tRNA + S-adenosyl-L-methionine = N(7)-methylguanosine(46) in tRNA + S-adenosyl-L-homocysteine. The protein operates within tRNA modification; N(7)-methylguanine-tRNA biosynthesis. Functionally, catalyzes the formation of N(7)-methylguanine at position 46 (m7G46) in tRNA. The polypeptide is tRNA (guanine-N(7)-)-methyltransferase (Ruegeria pomeroyi (strain ATCC 700808 / DSM 15171 / DSS-3) (Silicibacter pomeroyi)).